A 254-amino-acid chain; its full sequence is Tryptophan synthase alpha chain (254 aa).

Active-site proton acceptor residues include Glu-48 and Asp-59.

The protein belongs to the TrpA family. Tetramer of two alpha and two beta chains.

It carries out the reaction (1S,2R)-1-C-(indol-3-yl)glycerol 3-phosphate + L-serine = D-glyceraldehyde 3-phosphate + L-tryptophan + H2O. The protein operates within amino-acid biosynthesis; L-tryptophan biosynthesis; L-tryptophan from chorismate: step 5/5. Functionally, the alpha subunit is responsible for the aldol cleavage of indoleglycerol phosphate to indole and glyceraldehyde 3-phosphate. The chain is Tryptophan synthase alpha chain from Desulfotalea psychrophila (strain LSv54 / DSM 12343).